The sequence spans 179 residues: Ribosome maturation factor RimM (179 aa).

A PRC barrel domain is found at 101–179 (EGEVYVHDLC…VELMHRWILE (79 aa)).

Belongs to the RimM family. As to quaternary structure, binds ribosomal protein uS19.

The protein resides in the cytoplasm. An accessory protein needed during the final step in the assembly of 30S ribosomal subunit, possibly for assembly of the head region. Essential for efficient processing of 16S rRNA. May be needed both before and after RbfA during the maturation of 16S rRNA. It has affinity for free ribosomal 30S subunits but not for 70S ribosomes. This Treponema denticola (strain ATCC 35405 / DSM 14222 / CIP 103919 / JCM 8153 / KCTC 15104) protein is Ribosome maturation factor RimM.